The chain runs to 283 residues: Protein/nucleic acid deglycase HchA (283 aa).

The Zn(2+) site is built by H86, E91, and H123. C185 acts as the Nucleophile in catalysis.

It belongs to the peptidase C56 family. HchA subfamily. In terms of assembly, homodimer.

The protein localises to the cytoplasm. It catalyses the reaction N(omega)-(1-hydroxy-2-oxopropyl)-L-arginyl-[protein] + H2O = lactate + L-arginyl-[protein] + H(+). It carries out the reaction N(6)-(1-hydroxy-2-oxopropyl)-L-lysyl-[protein] + H2O = lactate + L-lysyl-[protein] + H(+). The catalysed reaction is S-(1-hydroxy-2-oxopropyl)-L-cysteinyl-[protein] + H2O = lactate + L-cysteinyl-[protein] + H(+). The enzyme catalyses N(omega)-(1-hydroxy-2-oxoethyl)-L-arginyl-[protein] + H2O = L-arginyl-[protein] + glycolate + H(+). It catalyses the reaction N(6)-(1-hydroxy-2-oxoethyl)-L-lysyl-[protein] + H2O = glycolate + L-lysyl-[protein] + H(+). It carries out the reaction S-(1-hydroxy-2-oxoethyl)-L-cysteinyl-[protein] + H2O = glycolate + L-cysteinyl-[protein] + H(+). The catalysed reaction is N(2)-(1-hydroxy-2-oxopropyl)-dGTP + H2O = lactate + dGTP + H(+). The enzyme catalyses N(2)-(1-hydroxy-2-oxopropyl)-GTP + H2O = lactate + GTP + H(+). It catalyses the reaction N(2)-(1-hydroxy-2-oxopropyl)-GDP + H2O = lactate + GDP + H(+). It carries out the reaction N(2)-(1-hydroxy-2-oxopropyl)-GMP + H2O = lactate + GMP + H(+). The catalysed reaction is N(2)-(1-hydroxy-2-oxoethyl)-dGTP + H2O = dGTP + glycolate + H(+). The enzyme catalyses N(2)-(1-hydroxy-2-oxoethyl)-GTP + H2O = glycolate + GTP + H(+). It catalyses the reaction N(2)-(1-hydroxy-2-oxoethyl)-GDP + H2O = glycolate + GDP + H(+). It carries out the reaction N(2)-(1-hydroxy-2-oxoethyl)-GMP + H2O = glycolate + GMP + H(+). The catalysed reaction is an N(2)-(1-hydroxy-2-oxopropyl)-guanosine in RNA + H2O = a guanosine in RNA + lactate + H(+). The enzyme catalyses an N(2)-(1-hydroxy-2-oxopropyl)-2'-deoxyguanosine in DNA + H2O = a 2'-deoxyguanosine in DNA + lactate + H(+). It catalyses the reaction an N(2)-(1-hydroxy-2-oxoethyl)-guanosine in RNA + H2O = a guanosine in RNA + glycolate + H(+). It carries out the reaction an N(2)-(1-hydroxy-2-oxoethyl)-2'-deoxyguanosine in DNA + H2O = a 2'-deoxyguanosine in DNA + glycolate + H(+). Its function is as follows. Protein and nucleotide deglycase that catalyzes the deglycation of the Maillard adducts formed between amino groups of proteins or nucleotides and reactive carbonyl groups of glyoxals. Thus, functions as a protein deglycase that repairs methylglyoxal- and glyoxal-glycated proteins, and releases repaired proteins and lactate or glycolate, respectively. Deglycates cysteine, arginine and lysine residues in proteins, and thus reactivates these proteins by reversing glycation by glyoxals. Acts on early glycation intermediates (hemithioacetals and aminocarbinols), preventing the formation of Schiff bases and advanced glycation endproducts (AGE). Also functions as a nucleotide deglycase able to repair glycated guanine in the free nucleotide pool (GTP, GDP, GMP, dGTP) and in DNA and RNA. Is thus involved in a major nucleotide repair system named guanine glycation repair (GG repair), dedicated to reversing methylglyoxal and glyoxal damage via nucleotide sanitization and direct nucleic acid repair. Plays an important role in protecting cells from carbonyl stress. The polypeptide is Protein/nucleic acid deglycase HchA (Escherichia coli O81 (strain ED1a)).